The primary structure comprises 311 residues: Aspartate carbamoyltransferase catalytic subunit (311 aa).

2 residues coordinate carbamoyl phosphate: R55 and T56. An L-aspartate-binding site is contributed by K84. Carbamoyl phosphate-binding residues include R105, H133, and Q136. The L-aspartate site is built by R166 and R229. L268 and P269 together coordinate carbamoyl phosphate.

This sequence belongs to the aspartate/ornithine carbamoyltransferase superfamily. ATCase family. In terms of assembly, heterododecamer (2C3:3R2) of six catalytic PyrB chains organized as two trimers (C3), and six regulatory PyrI chains organized as three dimers (R2).

It catalyses the reaction carbamoyl phosphate + L-aspartate = N-carbamoyl-L-aspartate + phosphate + H(+). Its pathway is pyrimidine metabolism; UMP biosynthesis via de novo pathway; (S)-dihydroorotate from bicarbonate: step 2/3. Functionally, catalyzes the condensation of carbamoyl phosphate and aspartate to form carbamoyl aspartate and inorganic phosphate, the committed step in the de novo pyrimidine nucleotide biosynthesis pathway. The polypeptide is Aspartate carbamoyltransferase catalytic subunit (Alkaliphilus metalliredigens (strain QYMF)).